Reading from the N-terminus, the 287-residue chain is Small ribosomal subunit protein uS2 (287 aa).

The tract at residues 233 to 287 (HKAPQDDIEPMAEWEKQLLQSGDSSGETRPISGTDRPLDGDLSKGPAPQDEELSD) is disordered. Residues 250–259 (LLQSGDSSGE) are compositionally biased toward polar residues.

This sequence belongs to the universal ribosomal protein uS2 family.

This is Small ribosomal subunit protein uS2 from Tropheryma whipplei (strain TW08/27) (Whipple's bacillus).